The primary structure comprises 510 residues: Chromosomal replication initiator protein DnaA (510 aa).

The domain I, interacts with DnaA modulators stretch occupies residues 1–107; the sequence is MTNDPGSGFA…VRIAPPPADD (107 aa). A domain II region spans residues 107-169; it reads DDDDSVAAAV…ADTSASADGT (63 aa). Residues 119–168 form a disordered region; that stretch reads PGLEASPETSQEVSDEIDDFGENAPKSRQSWPTHFKKRSTDADTSASADG. The domain III, AAA+ region stretch occupies residues 170–386; the sequence is SLNRRYTFDT…GALIRVTAFA (217 aa). Residues glycine 214, glycine 216, lysine 217, and threonine 218 each coordinate ATP. The domain IV, binds dsDNA stretch occupies residues 387–510; that stretch reads SLNKTPIDKA…TTRIRQRSKR (124 aa).

This sequence belongs to the DnaA family. As to quaternary structure, oligomerizes as a right-handed, spiral filament on DNA at oriC.

It localises to the cytoplasm. Functionally, plays an essential role in the initiation and regulation of chromosomal replication. ATP-DnaA binds to the origin of replication (oriC) to initiate formation of the DNA replication initiation complex once per cell cycle. Binds the DnaA box (a 9 base pair repeat at the origin) and separates the double-stranded (ds)DNA. Forms a right-handed helical filament on oriC DNA; dsDNA binds to the exterior of the filament while single-stranded (ss)DNA is stabiized in the filament's interior. The ATP-DnaA-oriC complex binds and stabilizes one strand of the AT-rich DNA unwinding element (DUE), permitting loading of DNA polymerase. After initiation quickly degrades to an ADP-DnaA complex that is not apt for DNA replication. Binds acidic phospholipids. This chain is Chromosomal replication initiator protein DnaA, found in Mycobacterium ulcerans (strain Agy99).